The sequence spans 382 residues: Acetylornithine deacetylase (382 aa).

H79 provides a ligand contact to Zn(2+). Residue D81 is part of the active site. Position 111 (D111) interacts with Zn(2+). E143 is an active-site residue. 3 residues coordinate Zn(2+): E144, E168, and H354.

It belongs to the peptidase M20A family. ArgE subfamily. As to quaternary structure, homodimer. Zn(2+) is required as a cofactor. It depends on Co(2+) as a cofactor. The cofactor is glutathione.

Its subcellular location is the cytoplasm. The catalysed reaction is N(2)-acetyl-L-ornithine + H2O = L-ornithine + acetate. It functions in the pathway amino-acid biosynthesis; L-arginine biosynthesis; L-ornithine from N(2)-acetyl-L-ornithine (linear): step 1/1. Its function is as follows. Catalyzes the hydrolysis of the amide bond of N(2)-acetylated L-amino acids. Cleaves the acetyl group from N-acetyl-L-ornithine to form L-ornithine, an intermediate in L-arginine biosynthesis pathway, and a branchpoint in the synthesis of polyamines. The sequence is that of Acetylornithine deacetylase from Pasteurella multocida (strain Pm70).